The sequence spans 303 residues: UDP-3-O-acyl-N-acetylglucosamine deacetylase (303 aa).

Zn(2+) is bound by residues His78, His237, and Asp241. Residue His264 is the Proton donor of the active site.

It belongs to the LpxC family. It depends on Zn(2+) as a cofactor.

The catalysed reaction is a UDP-3-O-[(3R)-3-hydroxyacyl]-N-acetyl-alpha-D-glucosamine + H2O = a UDP-3-O-[(3R)-3-hydroxyacyl]-alpha-D-glucosamine + acetate. It functions in the pathway glycolipid biosynthesis; lipid IV(A) biosynthesis; lipid IV(A) from (3R)-3-hydroxytetradecanoyl-[acyl-carrier-protein] and UDP-N-acetyl-alpha-D-glucosamine: step 2/6. Its function is as follows. Catalyzes the hydrolysis of UDP-3-O-myristoyl-N-acetylglucosamine to form UDP-3-O-myristoylglucosamine and acetate, the committed step in lipid A biosynthesis. This chain is UDP-3-O-acyl-N-acetylglucosamine deacetylase, found in Pseudomonas fluorescens (strain SBW25).